A 513-amino-acid chain; its full sequence is Ribonuclease Y (513 aa).

A helical transmembrane segment spans residues Tyr6–Asp26. Positions Glu35–Ile59 are disordered. The KH domain occupies Thr203–Val288. In terms of domain architecture, HD spans Val329 to Ala422.

This sequence belongs to the RNase Y family.

Its subcellular location is the cell membrane. Its function is as follows. Endoribonuclease that initiates mRNA decay. In Clostridium botulinum (strain Okra / Type B1), this protein is Ribonuclease Y.